The sequence spans 459 residues: Ribulose bisphosphate carboxylase (459 aa).

Position 111 (N111) interacts with substrate. K166 (proton acceptor) is an active-site residue. Residue K168 participates in substrate binding. Mg(2+) is bound by residues K191, D193, and E194. K191 carries the post-translational modification N6-carboxylysine. The Proton acceptor role is filled by H287. Residues R288, H321, and S368 each contribute to the substrate site.

Belongs to the RuBisCO large chain family. Type II subfamily. Homodimer. Mg(2+) is required as a cofactor.

It is found in the cytoplasm. It carries out the reaction 2 (2R)-3-phosphoglycerate + 2 H(+) = D-ribulose 1,5-bisphosphate + CO2 + H2O. The catalysed reaction is D-ribulose 1,5-bisphosphate + O2 = 2-phosphoglycolate + (2R)-3-phosphoglycerate + 2 H(+). Its function is as follows. RuBisCO catalyzes two reactions: the carboxylation of D-ribulose 1,5-bisphosphate, the primary event in carbon dioxide fixation, as well as the oxidative fragmentation of the pentose substrate. Both reactions occur simultaneously and in competition at the same active site. In Halothiobacillus neapolitanus (strain ATCC 23641 / c2) (Thiobacillus neapolitanus), this protein is Ribulose bisphosphate carboxylase.